Consider the following 1070-residue polypeptide: Duffy receptor gamma form (1070 aa).

Residues 1–21 (MEGKKKRPLFFLLVLLLSHKA) form the signal peptide. Over 22-1003 (NNVLFERMNG…SYECFTKGSS (982 aa)) the chain is Extracellular. Residues N134 and N179 are each glycosylated (N-linked (GlcNAc...) asparagine). Cystine bridges form between C214-C243 and C227-C234. The Cell attachment site signature appears at 279-281 (RGD). Disulfide bonds link C296-C372, C410-C427, C422-C502, and C431-C500. Residues 518 to 912 (VGSGVESKAP…LNNRKLNRDQ (395 aa)) are disordered. Over residues 526-541 (APSSNPINEAVKSSSG) the composition is skewed to polar residues. Composition is skewed to basic and acidic residues over residues 544–559 (KVQEDSAHRSVNEGEG), 672–707 (GEVHNGTDTEPKEDGEKADPQKNIEVKGKQDTDDRS), and 714–731 (HTDERASLGETHMEKDTE). N676 is a glycosylation site (N-linked (GlcNAc...) asparagine). A compositionally biased stretch (polar residues) spans 732 to 763 (TTGGSTLTPEQNVSVASDNGNVPGSGNKQNEG). Residue N743 is glycosylated (N-linked (GlcNAc...) asparagine). Residues 766 to 776 (ALSGAESLESS) show a composition bias toward low complexity. N785 carries N-linked (GlcNAc...) asparagine glycosylation. Positions 796–807 (GNEKDFQKHDFM) are enriched in basic and acidic residues. Low complexity predominate over residues 814–863 (DQTSSDHTSSDQTSSDQTSSDQTSSDQTSSDQTSSDQTSSDQTSSDQTID). Residues 864–888 (TEGHHRDNVRNPEIKSSEDMSKGDF) are compositionally biased toward basic and acidic residues. Residues 890–906 (RNSNSNELYSHNNLNNR) are compositionally biased toward polar residues. Residue N936 is glycosylated (N-linked (GlcNAc...) asparagine). Residues 1004 to 1025 (TGIVYFATGGAFLIILLLFASW) traverse the membrane as a helical segment. Topologically, residues 1026-1070 (NAASNDYEEEATFDEFEEYCYNIHRTPQMPNDIEHMQQFTPLDYS) are cytoplasmic.

It is found in the membrane. Its function is as follows. Binds to Neu5Gc-sialylated receptors on macaque erythrocytes. This is Duffy receptor gamma form from Plasmodium knowlesi.